The following is a 175-amino-acid chain: ATP synthase subunit b (175 aa).

Residues 19 to 35 (GLIFWTTVTFLIVLFIL) form a helical membrane-spanning segment.

Belongs to the ATPase B chain family. F-type ATPases have 2 components, F(1) - the catalytic core - and F(0) - the membrane proton channel. F(1) has five subunits: alpha(3), beta(3), gamma(1), delta(1), epsilon(1). F(0) has four main subunits: a(1), b(2) and c(10-14). The alpha and beta chains form an alternating ring which encloses part of the gamma chain. F(1) is attached to F(0) by a central stalk formed by the gamma and epsilon chains, while a peripheral stalk is formed by the delta and b chains.

Its subcellular location is the cell inner membrane. Functionally, f(1)F(0) ATP synthase produces ATP from ADP in the presence of a proton or sodium gradient. F-type ATPases consist of two structural domains, F(1) containing the extramembraneous catalytic core and F(0) containing the membrane proton channel, linked together by a central stalk and a peripheral stalk. During catalysis, ATP synthesis in the catalytic domain of F(1) is coupled via a rotary mechanism of the central stalk subunits to proton translocation. Component of the F(0) channel, it forms part of the peripheral stalk, linking F(1) to F(0). This chain is ATP synthase subunit b, found in Chlorobium phaeobacteroides (strain BS1).